The following is a 359-amino-acid chain: MIEFIDLKNQQARIKDKIDAGIQRVLRHGQYILGPEVTELEDRLADFVGAKYCISCANGTDALQIVQMALGVGPGDEVITPGFTYVATAETVALLGAKPVYVDIDPRTYNLDPQLLEAAITPRTKAIIPVSLYGQCADFDAINAIASKYGIPVIEDAAQSFGASYKGKRSCNLSTVACTSFFPSKPLGCYGDGGAIFTNDDELATAIRQIARHGQDRRYHHIRVGVNSRLDTLQAAILLPKLEIFEEEIALRQKVAAEYDLSLKQVGIGTPFIEVNNISVYAQYTVRMDNRESVQASLKAAGVPTAVHYPIPLNKQPAVADEKAKLPVGDKAATQVMSLPMHPYLDTASIKIICAALTN.

UDP-2-acetamido-2-deoxy-alpha-D-ribo-hex-3-uluronate-binding residues include glycine 29, tyrosine 31, and serine 184. Position 185 is an N6-(pyridoxal phosphate)lysine (lysine 185). Residues arginine 229, histidine 308, and tyrosine 309 each coordinate UDP-2-acetamido-2-deoxy-alpha-D-ribo-hex-3-uluronate.

It belongs to the DegT/DnrJ/EryC1 family. Homodimer. Requires pyridoxal 5'-phosphate as cofactor.

The enzyme catalyses UDP-2-acetamido-2-deoxy-alpha-D-ribo-hex-3-uluronate + L-glutamate = UDP-2-acetamido-3-amino-2,3-dideoxy-alpha-D-glucuronate + 2-oxoglutarate. It participates in bacterial outer membrane biogenesis; LPS O-antigen biosynthesis. Functionally, plays a role in the biosynthesis of B-band O antigen for serotype O5. Catalyzes the amination of UDP-2-acetamido-2-deoxy-3-oxo-D-glucuronic acid (UDP-3-oxo-D-GlcNAcA) to UDP-2-acetamido-3-amino-2,3-dideoxy-D-glucuronic acid (UDP-GlcNAc3NA), using L-glutamate as the preferred amine donor. The protein is UDP-2-acetamido-2-deoxy-3-oxo-D-glucuronate aminotransferase of Pseudomonas aeruginosa (strain ATCC 15692 / DSM 22644 / CIP 104116 / JCM 14847 / LMG 12228 / 1C / PRS 101 / PAO1).